Here is a 305-residue protein sequence, read N- to C-terminus: Aspartate carbamoyltransferase catalytic subunit (305 aa).

Carbamoyl phosphate is bound by residues Arg56 and Thr57. Position 84 (Lys84) interacts with L-aspartate. The carbamoyl phosphate site is built by Arg106, His136, and Gln139. Residues Arg169 and Arg221 each contribute to the L-aspartate site. Carbamoyl phosphate contacts are provided by Ala262 and Pro263.

It belongs to the aspartate/ornithine carbamoyltransferase superfamily. ATCase family. Heterododecamer (2C3:3R2) of six catalytic PyrB chains organized as two trimers (C3), and six regulatory PyrI chains organized as three dimers (R2).

The enzyme catalyses carbamoyl phosphate + L-aspartate = N-carbamoyl-L-aspartate + phosphate + H(+). It functions in the pathway pyrimidine metabolism; UMP biosynthesis via de novo pathway; (S)-dihydroorotate from bicarbonate: step 2/3. Catalyzes the condensation of carbamoyl phosphate and aspartate to form carbamoyl aspartate and inorganic phosphate, the committed step in the de novo pyrimidine nucleotide biosynthesis pathway. This is Aspartate carbamoyltransferase catalytic subunit from Streptococcus sanguinis (strain SK36).